We begin with the raw amino-acid sequence, 379 residues long: Chaperone protein DnaJ (379 aa).

Residues 5-70 (DYYEVLGVEK…QKRAAYDQYG (66 aa)) form the J domain. A CR-type zinc finger spans residues 133–211 (GKSVEIRVPT…CHGQGRVEKT (79 aa)). Residues C146, C149, C163, C166, C185, C188, C199, and C202 each coordinate Zn(2+). CXXCXGXG motif repeat units follow at residues 146–153 (CDTCDGSG), 163–170 (CTTCHGQG), 185–192 (CPTCGGKG), and 199–206 (CDVCHGQG).

Belongs to the DnaJ family. As to quaternary structure, homodimer. Zn(2+) serves as cofactor.

It localises to the cytoplasm. In terms of biological role, participates actively in the response to hyperosmotic and heat shock by preventing the aggregation of stress-denatured proteins and by disaggregating proteins, also in an autonomous, DnaK-independent fashion. Unfolded proteins bind initially to DnaJ; upon interaction with the DnaJ-bound protein, DnaK hydrolyzes its bound ATP, resulting in the formation of a stable complex. GrpE releases ADP from DnaK; ATP binding to DnaK triggers the release of the substrate protein, thus completing the reaction cycle. Several rounds of ATP-dependent interactions between DnaJ, DnaK and GrpE are required for fully efficient folding. Also involved, together with DnaK and GrpE, in the DNA replication of plasmids through activation of initiation proteins. The protein is Chaperone protein DnaJ of Pseudoalteromonas atlantica (strain T6c / ATCC BAA-1087).